Here is a 294-residue protein sequence, read N- to C-terminus: Probable porphobilinogen deaminase (294 aa).

Position 233 is an S-(dipyrrolylmethanemethyl)cysteine (C233).

Belongs to the HMBS family. The cofactor is dipyrromethane.

The catalysed reaction is 4 porphobilinogen + H2O = hydroxymethylbilane + 4 NH4(+). It functions in the pathway porphyrin-containing compound metabolism; protoporphyrin-IX biosynthesis; coproporphyrinogen-III from 5-aminolevulinate: step 2/4. Its function is as follows. Tetrapolymerization of the monopyrrole PBG into the hydroxymethylbilane pre-uroporphyrinogen in several discrete steps. This Sulfurisphaera tokodaii (strain DSM 16993 / JCM 10545 / NBRC 100140 / 7) (Sulfolobus tokodaii) protein is Probable porphobilinogen deaminase.